A 252-amino-acid chain; its full sequence is Homeobox protein EMX2 (252 aa).

The segment at residues 154–213 (PKRIRTAFSPSQLLRLEHAFEKNHYVVGAERKQLAHSLSLTETQVKVWFQNRRTKFKRQK) is a DNA-binding region (homeobox). The tract at residues 212 to 252 (QKLEEEGSDSQQKKKGTHHINRWRIATKQASPEEIDVTSDD) is disordered. The span at 224–233 (KKKGTHHINR) shows a compositional bias: basic residues.

Belongs to the EMX homeobox family. As to quaternary structure, interacts with translation initiation factor EIF4E. As to expression, cerebral cortex.

Its subcellular location is the nucleus. The protein localises to the cell projection. The protein resides in the axon. In terms of biological role, transcription factor, which in cooperation with EMX1, acts to generate the boundary between the roof and archipallium in the developing brain. May function in combination with OTX1/2 to specify cell fates in the developing central nervous system. In the inner ear, it controls the distribution of GPR156 at hair cell boundaries, and regulates the organization of stereociliary bundles in opposite orientations across the line of polarity reversal (LPR). The chain is Homeobox protein EMX2 (EMX2) from Homo sapiens (Human).